Consider the following 903-residue polypeptide: Protein translocase subunit SecA (903 aa).

Residues Gln87, 105–109 (GEGKT), and Asp494 each bind ATP. Residues 861–883 (SGSQGAAPRQPVRAEGKKVGRND) form a disordered region. Basic and acidic residues predominate over residues 872–881 (VRAEGKKVGR). 4 residues coordinate Zn(2+): Cys885, Cys887, Cys896, and Cys897.

This sequence belongs to the SecA family. In terms of assembly, monomer and homodimer. Part of the essential Sec protein translocation apparatus which comprises SecA, SecYEG and auxiliary proteins SecDF. Other proteins may also be involved. Requires Zn(2+) as cofactor.

The protein localises to the cell membrane. Its subcellular location is the cytoplasm. It catalyses the reaction ATP + H2O + cellular proteinSide 1 = ADP + phosphate + cellular proteinSide 2.. Functionally, part of the Sec protein translocase complex. Interacts with the SecYEG preprotein conducting channel. Has a central role in coupling the hydrolysis of ATP to the transfer of proteins into and across the cell membrane, serving as an ATP-driven molecular motor driving the stepwise translocation of polypeptide chains across the membrane. The chain is Protein translocase subunit SecA from Symbiobacterium thermophilum (strain DSM 24528 / JCM 14929 / IAM 14863 / T).